A 325-amino-acid chain; its full sequence is Biotin synthase (325 aa).

The Radical SAM core domain maps to 43–262 (CSVETAQLLS…VAVARLLMPR (220 aa)). The [4Fe-4S] cluster site is built by Cys-58, Cys-62, and Cys-65. [2Fe-2S] cluster contacts are provided by Cys-102, Cys-133, Cys-193, and Arg-266.

It belongs to the radical SAM superfamily. Biotin synthase family. In terms of assembly, homodimer. Requires [4Fe-4S] cluster as cofactor. It depends on [2Fe-2S] cluster as a cofactor.

It carries out the reaction (4R,5S)-dethiobiotin + (sulfur carrier)-SH + 2 reduced [2Fe-2S]-[ferredoxin] + 2 S-adenosyl-L-methionine = (sulfur carrier)-H + biotin + 2 5'-deoxyadenosine + 2 L-methionine + 2 oxidized [2Fe-2S]-[ferredoxin]. It participates in cofactor biosynthesis; biotin biosynthesis; biotin from 7,8-diaminononanoate: step 2/2. In terms of biological role, catalyzes the conversion of dethiobiotin (DTB) to biotin by the insertion of a sulfur atom into dethiobiotin via a radical-based mechanism. The polypeptide is Biotin synthase (Azorhizobium caulinodans (strain ATCC 43989 / DSM 5975 / JCM 20966 / LMG 6465 / NBRC 14845 / NCIMB 13405 / ORS 571)).